Consider the following 1915-residue polypeptide: Methylcytosine dioxygenase tet3-B (1915 aa).

The disordered stretch occupies residues Arg-28 to Gly-49. The CXXC-type zinc-finger motif lies at Ser-61–Glu-102. Residues Cys-68, Cys-71, Cys-74, Cys-80, Cys-83, Cys-86, Cys-96, and Cys-101 each contribute to the Zn(2+) site. Positions Pro-629–Lys-638 are enriched in polar residues. Disordered regions lie at residues Pro-629 to Glu-679, Gly-776 to Gln-806, and Phe-831 to Asn-880. Residues Lys-664–Arg-676 are compositionally biased toward basic residues. A compositionally biased stretch (low complexity) spans Pro-779–Ser-793. 2 stretches are compositionally biased toward polar residues: residues Val-838–Val-854 and Gln-864–Asn-880. Positions 974, 976, 1034, 1060, and 1062 each coordinate Zn(2+). Arg-1102 serves as a coordination point for 2-oxoglutarate. Residues Cys-1112, Cys-1114, Cys-1130, Cys-1139, and Cys-1199 each coordinate Zn(2+). A 2-oxoglutarate-binding site is contributed by Cys-1215. His-1221 provides a ligand contact to Zn(2+). The Fe cation site is built by His-1223 and Asp-1225. His-1257 is a 2-oxoglutarate binding site. Disordered stretches follow at residues Leu-1298–Pro-1356, Gly-1469–Glu-1516, and Pro-1719–Glu-1753. The span at Arg-1308–Asp-1339 shows a compositional bias: basic and acidic residues. Positions Thr-1340 to Lys-1355 are enriched in polar residues. Basic and acidic residues predominate over residues Asn-1482–His-1491. 2 stretches are compositionally biased toward polar residues: residues Ser-1494–Ser-1503 and Ala-1720–His-1732. His-1794 serves as a coordination point for Fe cation. Arg-1809–Ser-1811 provides a ligand contact to 2-oxoglutarate. The stretch at Leu-1827 to Leu-1860 forms a coiled coil.

It belongs to the TET family. Fe(2+) serves as cofactor. Zn(2+) is required as a cofactor. Detected in embryo (at protein level). Detected in embryonic head, in developing brain and eye.

The protein resides in the nucleus. It localises to the chromosome. It catalyses the reaction a 5-methyl-2'-deoxycytidine in DNA + 2-oxoglutarate + O2 = a 5-hydroxymethyl-2'-deoxycytidine in DNA + succinate + CO2. It carries out the reaction a 5-hydroxymethyl-2'-deoxycytidine in DNA + 2-oxoglutarate + O2 = a 5-formyl-2'-deoxycytidine in DNA + succinate + CO2 + H2O. The catalysed reaction is a 5-formyl-2'-deoxycytidine in DNA + 2-oxoglutarate + O2 = a 5-carboxyl-2'-deoxycytidine in DNA + succinate + CO2 + H(+). In terms of biological role, dioxygenase that catalyzes the conversion of the modified genomic base 5-methylcytosine (5mC) into 5-hydroxymethylcytosine (5hmC) and plays a key role in epigenetic chromatin reprogramming during embryonic development. Conversion of 5mC into 5hmC probably constitutes the first step in cytosine demethylation. Selectively binds to the promoter region of target genes and contributes to regulate the expression of numerous developmental genes, including pax6, rax, sox9 and six3. May also contribute to the regulation of target genes in ways that do not require its enzyme activity. The chain is Methylcytosine dioxygenase tet3-B from Xenopus laevis (African clawed frog).